Here is a 209-residue protein sequence, read N- to C-terminus: Imidazoleglycerol-phosphate dehydratase (209 aa).

The protein belongs to the imidazoleglycerol-phosphate dehydratase family.

The protein localises to the cytoplasm. It catalyses the reaction D-erythro-1-(imidazol-4-yl)glycerol 3-phosphate = 3-(imidazol-4-yl)-2-oxopropyl phosphate + H2O. The protein operates within amino-acid biosynthesis; L-histidine biosynthesis; L-histidine from 5-phospho-alpha-D-ribose 1-diphosphate: step 6/9. In Paracidovorax citrulli (strain AAC00-1) (Acidovorax citrulli), this protein is Imidazoleglycerol-phosphate dehydratase.